Consider the following 85-residue polypeptide: MQRNSRRVLIGKVVSDKMDKTITVLVETYKNHPIYKKRVKYSKKYKAHDENQVAQMGDKVEIMETRPLSKTKNFRLVRVIEKATL.

Belongs to the universal ribosomal protein uS17 family. As to quaternary structure, part of the 30S ribosomal subunit.

One of the primary rRNA binding proteins, it binds specifically to the 5'-end of 16S ribosomal RNA. This Mycoplasma capricolum subsp. capricolum (strain California kid / ATCC 27343 / NCTC 10154) protein is Small ribosomal subunit protein uS17.